The following is a 550-amino-acid chain: Tyrosinase HcTyr2 (550 aa).

The Cu cation site is built by His-56, His-84, His-93, His-282, His-286, and His-326.

It belongs to the tyrosinase family. The cofactor is Cu(2+).

The enzyme catalyses L-tyrosine + O2 = L-dopaquinone + H2O. The catalysed reaction is 2 L-tyrosine + O2 = 2 L-dopa. It catalyses the reaction 2 L-dopa + O2 = 2 L-dopaquinone + 2 H2O. Functionally, copper-containing oxidase that catalyzes the conversion of L-tyrosine to L-dopa and then to L-dopaquinone. Can use various phenols such as p-coumaric acid, phenol, pyrocatechol, syringol or pyrogallol. Accepts several of the constituents of lignin and potentially participates in lignin functionalization. The protein is Tyrosinase HcTyr2 of Hahella sp. (strain CCB-MM4).